Reading from the N-terminus, the 250-residue chain is MRIALTNDDGIQAPGLRAIYKALIEAGHTVDVVAPVTEQSAVGHAVTIAMPLRVKVFHENGFRGHGVYGTPTDCMKLGLSSLLEHKPELVVSGINAGANVGPDILYSGTVSAATEAAHMGYRAVALSYDSFRPEDISAHARHAAALLPHIEWAGLPERCVVNINYPAVPVESIKGVRVCPQTRAVWHDWYEHRTDPRGGSYWWLNGVIPPESVAPGTDRALLTEGYITVTPLRFDFTDSETLTRLASLEE.

A divalent metal cation is bound by residues aspartate 8, aspartate 9, serine 40, and asparagine 95.

Belongs to the SurE nucleotidase family. Requires a divalent metal cation as cofactor.

Its subcellular location is the cytoplasm. The enzyme catalyses a ribonucleoside 5'-phosphate + H2O = a ribonucleoside + phosphate. In terms of biological role, nucleotidase that shows phosphatase activity on nucleoside 5'-monophosphates. The protein is 5'-nucleotidase SurE of Nitratidesulfovibrio vulgaris (strain DP4) (Desulfovibrio vulgaris).